The primary structure comprises 324 residues: Delta-aminolevulinic acid dehydratase (324 aa).

The Zn(2+) site is built by Cys118, Cys120, and Cys128. Residue Lys195 is the Schiff-base intermediate with substrate of the active site. 5-aminolevulinate-binding residues include Arg205 and Arg217. Glu233 is a binding site for Mg(2+). The active-site Schiff-base intermediate with substrate is the Lys248. 2 residues coordinate 5-aminolevulinate: Ser274 and Tyr313.

The protein belongs to the ALAD family. As to quaternary structure, homooctamer. Zn(2+) serves as cofactor.

The enzyme catalyses 2 5-aminolevulinate = porphobilinogen + 2 H2O + H(+). It functions in the pathway porphyrin-containing compound metabolism; protoporphyrin-IX biosynthesis; coproporphyrinogen-III from 5-aminolevulinate: step 1/4. Functionally, catalyzes an early step in the biosynthesis of tetrapyrroles. Binds two molecules of 5-aminolevulinate per subunit, each at a distinct site, and catalyzes their condensation to form porphobilinogen. In Staphylococcus epidermidis (strain ATCC 12228 / FDA PCI 1200), this protein is Delta-aminolevulinic acid dehydratase (hemB).